Consider the following 367-residue polypeptide: MSANSFGKLFTVTTFGESHGPAIGCVVDGCPPGLELAPEEFTHDLQRRASGKSRHTSARREADEIEILSGVYEGRTTGTPIGLLIRNTDQRSKDYSNIAQQFRPGHADYTYWQKYGIRDPRGGGRSSARETTMRVAAGVIAKKWLKQRYGVLVRGFLSQLGQIRPAGFDWDAVEDNPFFWPHAAQVPELETYMDALRKSGDSVGARVDVVAGGVPAGWGEPIYGKLDAELAAALMSINAVKGVEIGDGFASAAQKGTEHRDLITPEGFLSNHAGGILGGISTGQAVTASMVLKPTSSLRLPGATVDADGSVVDVITTGRHDPCVGIRATPIAEAMMALVLMDQALRHRAQCGDVGEVSPRIPGQVDV.

The segment at 41-60 (FTHDLQRRASGKSRHTSARR) is disordered. Positions 48 and 54 each coordinate NADP(+). Residues 125 to 127 (RSS), 238 to 239 (NA), G278, 293 to 297 (KPTSS), and R319 each bind FMN.

The protein belongs to the chorismate synthase family. As to quaternary structure, homotetramer. FMNH2 serves as cofactor.

The catalysed reaction is 5-O-(1-carboxyvinyl)-3-phosphoshikimate = chorismate + phosphate. It functions in the pathway metabolic intermediate biosynthesis; chorismate biosynthesis; chorismate from D-erythrose 4-phosphate and phosphoenolpyruvate: step 7/7. Catalyzes the anti-1,4-elimination of the C-3 phosphate and the C-6 proR hydrogen from 5-enolpyruvylshikimate-3-phosphate (EPSP) to yield chorismate, which is the branch point compound that serves as the starting substrate for the three terminal pathways of aromatic amino acid biosynthesis. This reaction introduces a second double bond into the aromatic ring system. The sequence is that of Chorismate synthase from Xanthomonas euvesicatoria pv. vesicatoria (strain 85-10) (Xanthomonas campestris pv. vesicatoria).